The sequence spans 165 residues: Nucleotide-binding protein Ctha_0558 (165 aa).

It belongs to the YajQ family.

Its function is as follows. Nucleotide-binding protein. This Chloroherpeton thalassium (strain ATCC 35110 / GB-78) protein is Nucleotide-binding protein Ctha_0558.